The chain runs to 36 residues: Ostricacin-1 (36 aa).

Intrachain disulfides connect Cys-3/Cys-29, Cys-8/Cys-23, and Cys-13/Cys-30.

It localises to the secreted. Has antibacterial activity against the Gram-positive bacteria S.aureus 1056 MRSA (MIC=1.25 ug/ml) and S.aureus NCTC 4163 (MIC=6.7 ug/ml), and the Gram-negative bacteria E.coli O157:H7 (MIC=0.96 ug/ml) and E.coli 0111 (MIC=6.7 ug/ml). Does not have antifungal activity against the yeast C.albicans 3153A. The chain is Ostricacin-1 from Struthio camelus (Common ostrich).